The primary structure comprises 428 residues: Protein terminus (428 aa).

The C3H1-type zinc-finger motif lies at 325-346 (CRRCRTQFSRRSKLHIHQKLRC).

The protein is Protein terminus (term) of Drosophila melanogaster (Fruit fly).